The following is a 237-amino-acid chain: Probable transcriptional regulatory protein NIS_0560 (237 aa).

It belongs to the TACO1 family.

The protein resides in the cytoplasm. The chain is Probable transcriptional regulatory protein NIS_0560 from Nitratiruptor sp. (strain SB155-2).